The following is a 338-amino-acid chain: Ketol-acid reductoisomerase (NADP(+)) (338 aa).

Residues 1 to 181 (MKVFYDKDAD…GGGKAGIIET (181 aa)) form the KARI N-terminal Rossmann domain. NADP(+)-binding positions include 24-27 (YGSQ), arginine 47, and serine 52. Histidine 107 is an active-site residue. Glycine 133 contacts NADP(+). Residues 182–327 (NFREETETDL…EKLRAMMPWI (146 aa)) enclose the KARI C-terminal knotted domain. Residues aspartate 190, glutamate 194, glutamate 226, and glutamate 230 each contribute to the Mg(2+) site. Serine 251 is a substrate binding site.

It belongs to the ketol-acid reductoisomerase family. Mg(2+) is required as a cofactor.

It carries out the reaction (2R)-2,3-dihydroxy-3-methylbutanoate + NADP(+) = (2S)-2-acetolactate + NADPH + H(+). The catalysed reaction is (2R,3R)-2,3-dihydroxy-3-methylpentanoate + NADP(+) = (S)-2-ethyl-2-hydroxy-3-oxobutanoate + NADPH + H(+). The protein operates within amino-acid biosynthesis; L-isoleucine biosynthesis; L-isoleucine from 2-oxobutanoate: step 2/4. It participates in amino-acid biosynthesis; L-valine biosynthesis; L-valine from pyruvate: step 2/4. Involved in the biosynthesis of branched-chain amino acids (BCAA). Catalyzes an alkyl-migration followed by a ketol-acid reduction of (S)-2-acetolactate (S2AL) to yield (R)-2,3-dihydroxy-isovalerate. In the isomerase reaction, S2AL is rearranged via a Mg-dependent methyl migration to produce 3-hydroxy-3-methyl-2-ketobutyrate (HMKB). In the reductase reaction, this 2-ketoacid undergoes a metal-dependent reduction by NADPH to yield (R)-2,3-dihydroxy-isovalerate. The sequence is that of Ketol-acid reductoisomerase (NADP(+)) from Leptothrix cholodnii (strain ATCC 51168 / LMG 8142 / SP-6) (Leptothrix discophora (strain SP-6)).